A 106-amino-acid polypeptide reads, in one-letter code: Transcription initiation factor IIA subunit 2 (106 aa).

This sequence belongs to the TFIIA subunit 2 family. In terms of assembly, TFIIA is a heterodimer of the large unprocessed subunit 1 and a small subunit gamma. It was originally believed to be a heterotrimer of an alpha (p30), a beta (p20) and a gamma (p14) subunit. Forms a complex with Moonshiner/CG12721 and Trf2. Ubiquitous.

It is found in the nucleus. In terms of biological role, TFIIA is a component of the transcription machinery of RNA polymerase II and plays an important role in transcriptional activation. TFIIA in a complex with TBP mediates transcriptional activity. Part of a rhi-dependent transcription machinery that enables the generation of piRNA precursors from heterochromatin while maintaining the suppression of transposon-encoded promoters and enhancers. Forms a complex with Moonshiner/CG12721 and Trf2 which recruit transcriptional machinery to heterochromatin to initiate the bidirectional transcription of piRNA clusters, by interacting with the RDC (rhi, del and cuff) complex that binds to repressive H3K9me3 marks in the chromatin. This mechanism allows transcription to occur in piRNA clusters despite the lack of proper promoter elements and in the presence of the repressive H3K9me3 mark. In Drosophila melanogaster (Fruit fly), this protein is Transcription initiation factor IIA subunit 2 (TfIIA-S).